The primary structure comprises 252 residues: 2-succinyl-6-hydroxy-2,4-cyclohexadiene-1-carboxylate synthase (252 aa).

It belongs to the AB hydrolase superfamily. MenH family. Monomer.

The catalysed reaction is 5-enolpyruvoyl-6-hydroxy-2-succinyl-cyclohex-3-ene-1-carboxylate = (1R,6R)-6-hydroxy-2-succinyl-cyclohexa-2,4-diene-1-carboxylate + pyruvate. Its pathway is quinol/quinone metabolism; 1,4-dihydroxy-2-naphthoate biosynthesis; 1,4-dihydroxy-2-naphthoate from chorismate: step 3/7. It functions in the pathway quinol/quinone metabolism; menaquinone biosynthesis. In terms of biological role, catalyzes a proton abstraction reaction that results in 2,5-elimination of pyruvate from 2-succinyl-5-enolpyruvyl-6-hydroxy-3-cyclohexene-1-carboxylate (SEPHCHC) and the formation of 2-succinyl-6-hydroxy-2,4-cyclohexadiene-1-carboxylate (SHCHC). In Citrobacter koseri (strain ATCC BAA-895 / CDC 4225-83 / SGSC4696), this protein is 2-succinyl-6-hydroxy-2,4-cyclohexadiene-1-carboxylate synthase.